The sequence spans 301 residues: MSADMAAQSESGEGGDDGRADGGLGDRLVYLAVLSRPRFWLYLAGPVVVGVAAAASALADLFGLEPVALFAYFLVPANVFLYGVNDVFDADVDEANPKKDDREARWRGDPVNTVVVAASGLLGVGLFAVAPRVAWPWLAAHFFLAVEYSAPPFRFKTTPLLDSVSNGLYVLPGVAAYAAVSGSNPPMLAVAGAWLWTMGMHTFSAIPDIEPDREAGIRTTATALGERRTYWYCAATWVLAAVAFAAVDLRLGALLAAYPVVVLGIVAAGVDVDRAYWWYPVINTVVGMLITLGALWRLVNG.

The segment at 1-20 (MSADMAAQSESGEGGDDGRA) is disordered. Transmembrane regions (helical) follow at residues 39–59 (FWLY…SALA), 61–81 (LFGL…NVFL), 110–130 (PVNT…FAVA), 133–153 (VAWP…APPF), 160–180 (LLDS…YAAV), 186–206 (PMLA…FSAI), 229–249 (TYWY…AVDL), 252–272 (GALL…GVDV), and 276–296 (YWWY…GALW).

It belongs to the UbiA prenyltransferase family.

It localises to the cell membrane. It carries out the reaction all-trans-lycopene + dimethylallyl diphosphate + H2O = dihydroisopentenyldehydrorhodopin + diphosphate. It catalyses the reaction isopentenyldehydrorhodopin + dimethylallyl diphosphate + H2O = dihydrobisanhydrobacterioruberin + diphosphate. Its pathway is carotenoid biosynthesis. Its function is as follows. Involved in the biosynthesis of the acyclic C50 carotenoid bacterioruberin (BR). Acts as a bifunctional elongase/hydratase that catalyzes the elongation of lycopene by attaching a C(5) isoprene unit at C-2, as well as the hydroxylation of the previous end of the molecule. The enzyme acts at both ends of the substrate, and catalyzes the conversion of lycopene to the C(45) intermediate dihydroisopentenyldehydrorhodopin (DH-IDR) and the conversion of isopentenyldehydrorhodopin (IDR) to the C(50) carotenoid dihydrobisanhydrobacterioruberin (DH-BABR). Can also catalyze the conversion of lycopene to tetrahydrobisanhydrobacterioruberin (TH-BABR). The polypeptide is Lycopene elongase/hydratase (Haloferax volcanii (strain ATCC 29605 / DSM 3757 / JCM 8879 / NBRC 14742 / NCIMB 2012 / VKM B-1768 / DS2) (Halobacterium volcanii)).